A 196-amino-acid polypeptide reads, in one-letter code: Small ribosomal subunit protein uS4c (196 aa).

One can recognise an S4 RNA-binding domain in the interval 89–157 (MRLDNILFRL…VQNYIASSDP (69 aa)).

Belongs to the universal ribosomal protein uS4 family. Part of the 30S ribosomal subunit. Contacts protein S5. The interaction surface between S4 and S5 is involved in control of translational fidelity.

Its subcellular location is the plastid. The protein resides in the chloroplast. One of the primary rRNA binding proteins, it binds directly to 16S rRNA where it nucleates assembly of the body of the 30S subunit. Functionally, with S5 and S12 plays an important role in translational accuracy. The chain is Small ribosomal subunit protein uS4c (rps4) from Elymus canadensis (Canada wild rye).